Here is a 515-residue protein sequence, read N- to C-terminus: MDEFHRYGKEDSSWQQCFLYPLFFQEDLYAISHDHYLDGSSSSEPMEHFSFNDQLSFLTVKRLIGRIREQNHSIGLFVNCDPNPLVDRNKSSYFESVLEGLTLVLEVPFSTRSKYSVQGIKEWKSFRSIHSIFPFLEEKFPHSNYILDTRIPYSIHPEFLVRTFRRWIQDAPSLHPLRSVLYEYRNSPENLQRSIIVAPRVNTRFFLFLWNHYAYECESILVPLLKRSFQSRSSSHGSFPERTLFDRKIKHIIRISHRNSLKSIWFLKDPKIHYVRYGERSIIAIKGTHLLVKKCRYYLPIFRQCYFHLWSEPYRVCSHQLSKNCSSFPGYSLGVRMKPLLVRTKMPGELFITDLITDEFYPIVPIVSIIGLLAREKFCDISGRPISKLAWTSLTDDDILDRFDRIWRNFFHYYSGSFGRDGLYRIKYILSLSCAKTLACKHKSTIRVVRKELGPELFKKSFSKEREFDSPAFSSKAVARSQRERIWHSDIPQINPLANSWQKIQDLKIKNLFDQ.

This sequence belongs to the intron maturase 2 family. MatK subfamily.

It localises to the plastid. Its subcellular location is the chloroplast. In terms of biological role, usually encoded in the trnK tRNA gene intron. Probably assists in splicing its own and other chloroplast group II introns. This is Maturase K from Cedrus atlantica (Atlas cedar).